A 237-amino-acid chain; its full sequence is tRNA (guanine-N(1)-)-methyltransferase (237 aa).

S-adenosyl-L-methionine contacts are provided by residues Gly113 and 133-138; that span reads MGDYIL.

Belongs to the RNA methyltransferase TrmD family. Homodimer.

Its subcellular location is the cytoplasm. It catalyses the reaction guanosine(37) in tRNA + S-adenosyl-L-methionine = N(1)-methylguanosine(37) in tRNA + S-adenosyl-L-homocysteine + H(+). Functionally, specifically methylates guanosine-37 in various tRNAs. This chain is tRNA (guanine-N(1)-)-methyltransferase, found in Wolinella succinogenes (strain ATCC 29543 / DSM 1740 / CCUG 13145 / JCM 31913 / LMG 7466 / NCTC 11488 / FDC 602W) (Vibrio succinogenes).